The primary structure comprises 171 residues: Shikimate kinase (171 aa).

11 to 16 (ATGKTT) lines the ATP pocket. Residue threonine 15 coordinates Mg(2+). Substrate contacts are provided by aspartate 33, arginine 57, and glycine 79. Arginine 117 is a binding site for ATP. Arginine 136 is a binding site for substrate.

Belongs to the shikimate kinase family. Monomer. Mg(2+) is required as a cofactor.

The protein localises to the cytoplasm. It carries out the reaction shikimate + ATP = 3-phosphoshikimate + ADP + H(+). The protein operates within metabolic intermediate biosynthesis; chorismate biosynthesis; chorismate from D-erythrose 4-phosphate and phosphoenolpyruvate: step 5/7. Functionally, catalyzes the specific phosphorylation of the 3-hydroxyl group of shikimic acid using ATP as a cosubstrate. The polypeptide is Shikimate kinase (Thermoanaerobacter pseudethanolicus (strain ATCC 33223 / 39E) (Clostridium thermohydrosulfuricum)).